The chain runs to 353 residues: sn-glycerol-3-phosphate import ATP-binding protein UgpC 3 (353 aa).

Residues 4–235 (IALKDVRKVY…PATTFVATFI (232 aa)) form the ABC transporter domain. 37-44 (GPSGCGKS) contacts ATP.

Belongs to the ABC transporter superfamily. sn-glycerol-3-phosphate importer (TC 3.A.1.1.3) family. The complex is composed of two ATP-binding proteins (UgpC), two transmembrane proteins (UgpA and UgpE) and a solute-binding protein (UgpB).

It localises to the cell inner membrane. The enzyme catalyses sn-glycerol 3-phosphate(out) + ATP + H2O = sn-glycerol 3-phosphate(in) + ADP + phosphate + H(+). Its function is as follows. Part of the ABC transporter complex UgpBAEC involved in sn-glycerol-3-phosphate (G3P) import. Responsible for energy coupling to the transport system. The polypeptide is sn-glycerol-3-phosphate import ATP-binding protein UgpC 3 (Agrobacterium fabrum (strain C58 / ATCC 33970) (Agrobacterium tumefaciens (strain C58))).